A 262-amino-acid chain; its full sequence is Taurine import ATP-binding protein TauB (262 aa).

Positions Val-4–Ser-234 constitute an ABC transporter domain. Residue Gly-39 to Ser-46 participates in ATP binding.

It belongs to the ABC transporter superfamily. Taurine importer (TC 3.A.1.17.1) family. As to quaternary structure, the complex is composed of two ATP-binding proteins (TauB), two transmembrane proteins (TauC) and a solute-binding protein (TauA).

The protein localises to the cell inner membrane. The catalysed reaction is taurine(out) + ATP + H2O = taurine(in) + ADP + phosphate + H(+). Its function is as follows. Part of the ABC transporter complex TauABC involved in taurine import. Responsible for energy coupling to the transport system. The protein is Taurine import ATP-binding protein TauB of Rhizobium johnstonii (strain DSM 114642 / LMG 32736 / 3841) (Rhizobium leguminosarum bv. viciae).